A 163-amino-acid polypeptide reads, in one-letter code: Photosystem II extrinsic protein V (163 aa).

An N-terminal signal peptide occupies residues 1 to 26 (MFRRLIGVVVATVLLTFQLIVGSATA). 4 residues coordinate heme c: cysteine 63, cysteine 66, histidine 67, and histidine 118.

This sequence belongs to the cytochrome c family. PsbV subfamily. As to quaternary structure, PSII is composed of 1 copy each of membrane proteins PsbA, PsbB, PsbC, PsbD, PsbE, PsbF, PsbH, PsbI, PsbJ, PsbK, PsbL, PsbM, PsbT, PsbX, PsbY, PsbZ, Psb30/Ycf12, peripheral proteins PsbO, CyanoQ (PsbQ), PsbU, PsbV and a large number of cofactors. It forms dimeric complexes. Heme c serves as cofactor.

It is found in the cellular thylakoid membrane. Functionally, one of the extrinsic, lumenal subunits of photosystem II (PSII). PSII is a light-driven water plastoquinone oxidoreductase, using light energy to abstract electrons from H(2)O, generating a proton gradient subsequently used for ATP formation. The extrinsic proteins stabilize the structure of photosystem II oxygen-evolving complex (OEC), the ion environment of oxygen evolution and protect the OEC against heat-induced inactivation. Low-potential cytochrome c that plays a role in the OEC of PSII. This chain is Photosystem II extrinsic protein V, found in Trichormus variabilis (strain ATCC 29413 / PCC 7937) (Anabaena variabilis).